We begin with the raw amino-acid sequence, 165 residues long: Chorismate pyruvate-lyase (165 aa).

Substrate is bound by residues Arg-77, Leu-115, and Glu-156.

This sequence belongs to the UbiC family. Monomer.

It localises to the cytoplasm. It catalyses the reaction chorismate = 4-hydroxybenzoate + pyruvate. It functions in the pathway cofactor biosynthesis; ubiquinone biosynthesis. Functionally, removes the pyruvyl group from chorismate, with concomitant aromatization of the ring, to provide 4-hydroxybenzoate (4HB) for the ubiquinone pathway. The polypeptide is Chorismate pyruvate-lyase (Salmonella typhi).